The sequence spans 91 residues: Small ribosomal subunit protein uS19 (91 aa).

It belongs to the universal ribosomal protein uS19 family.

Its function is as follows. Protein S19 forms a complex with S13 that binds strongly to the 16S ribosomal RNA. The polypeptide is Small ribosomal subunit protein uS19 (Ralstonia pickettii (strain 12J)).